Consider the following 260-residue polypeptide: NSALWPVAGEAEVPFISCSASEFVELYVGMGASRVRDLFARAKKEAPSIIFIDEIDAVAKSRDGRFRIVSNDEREQTLNQLLTEMDGFDSNSAVIVLGATNRADVLDPALRRPGRFDRVVMVETPDRVGRQAILNVHVSKKELPLGDDVDLASIASMTTGFTGADLANLVNEAALLAGRQNKVVVEKIDFIHAVERSIAGIEKKTAKLQGSEKAVVARHEAGHAVVGTAVSKLLAGQPRVEKLSILPRSGRALGFTYTPS.

His-219 contributes to the Zn(2+) binding site. Glu-220 is a catalytic residue. Residue His-223 coordinates Zn(2+).

In the N-terminal section; belongs to the AAA ATPase family. It in the C-terminal section; belongs to the peptidase M41 family. It depends on Zn(2+) as a cofactor.

It is found in the plastid. Its subcellular location is the chloroplast thylakoid membrane. Its function is as follows. Probable ATP-dependent zinc metallopeptidase. The polypeptide is ATP-dependent zinc metalloprotease FTSH, chloroplastic (Helianthus annuus (Common sunflower)).